The following is a 322-amino-acid chain: HPr kinase/phosphorylase (322 aa).

Active-site residues include His-146 and Lys-167. 161 to 168 (GDSGLGKS) contacts ATP. Ser-168 contacts Mg(2+). Asp-185 acts as the Proton acceptor; for phosphorylation activity. Proton donor; for dephosphorylation activity in catalysis. Residues 209–218 (LEVRGLGLLD) form an important for the catalytic mechanism of both phosphorylation and dephosphorylation region. Residue Glu-210 coordinates Mg(2+). Arg-250 is a catalytic residue. Residues 271–276 (QVAAGR) form an important for the catalytic mechanism of dephosphorylation region.

Belongs to the HPrK/P family. As to quaternary structure, homohexamer. The cofactor is Mg(2+).

The catalysed reaction is [HPr protein]-L-serine + ATP = [HPr protein]-O-phospho-L-serine + ADP + H(+). It catalyses the reaction [HPr protein]-O-phospho-L-serine + phosphate + H(+) = [HPr protein]-L-serine + diphosphate. Catalyzes the ATP- as well as the pyrophosphate-dependent phosphorylation of a specific serine residue in HPr, a phosphocarrier protein of the phosphoenolpyruvate-dependent sugar phosphotransferase system (PTS). HprK/P also catalyzes the pyrophosphate-producing, inorganic phosphate-dependent dephosphorylation (phosphorolysis) of seryl-phosphorylated HPr (P-Ser-HPr). The sequence is that of HPr kinase/phosphorylase from Burkholderia lata (strain ATCC 17760 / DSM 23089 / LMG 22485 / NCIMB 9086 / R18194 / 383).